The primary structure comprises 239 residues: Probable transcriptional regulatory protein BT9727_0453 (239 aa).

The protein belongs to the TACO1 family. YeeN subfamily.

The protein resides in the cytoplasm. The sequence is that of Probable transcriptional regulatory protein BT9727_0453 from Bacillus thuringiensis subsp. konkukian (strain 97-27).